Reading from the N-terminus, the 397-residue chain is 1-deoxy-D-xylulose 5-phosphate reductoisomerase (397 aa).

Residues T17, G18, S19, I20, N47, and N130 each contribute to the NADPH site. K131 lines the 1-deoxy-D-xylulose 5-phosphate pocket. E132 lines the NADPH pocket. D156 contributes to the Mn(2+) binding site. 1-deoxy-D-xylulose 5-phosphate contacts are provided by S157, E158, S182, and H205. Position 158 (E158) interacts with Mn(2+). NADPH is bound at residue G211. 4 residues coordinate 1-deoxy-D-xylulose 5-phosphate: S218, N223, K224, and E227. Mn(2+) is bound at residue E227.

Belongs to the DXR family. Mg(2+) serves as cofactor. It depends on Mn(2+) as a cofactor.

The enzyme catalyses 2-C-methyl-D-erythritol 4-phosphate + NADP(+) = 1-deoxy-D-xylulose 5-phosphate + NADPH + H(+). The protein operates within isoprenoid biosynthesis; isopentenyl diphosphate biosynthesis via DXP pathway; isopentenyl diphosphate from 1-deoxy-D-xylulose 5-phosphate: step 1/6. Catalyzes the NADPH-dependent rearrangement and reduction of 1-deoxy-D-xylulose-5-phosphate (DXP) to 2-C-methyl-D-erythritol 4-phosphate (MEP). This chain is 1-deoxy-D-xylulose 5-phosphate reductoisomerase, found in Allorhizobium ampelinum (strain ATCC BAA-846 / DSM 112012 / S4) (Agrobacterium vitis (strain S4)).